The primary structure comprises 478 residues: Protein MAINTENANCE OF MERISTEMS (478 aa).

A disordered region spans residues 459-478; it reads ASTTNKRKRREEQQQTDWSE. Positions 464–468 match the Nuclear localization signal motif; sequence KRKRR.

As to expression, expressed in root meristem, root vasculature, shoot apical meristem (SAM), leaf vasculature and ovules.

Its subcellular location is the nucleus. In terms of biological role, required for the organization of the root apical meristem (RAM) and the shoot apical meristem (SAM). Required to maintain genome stability and cell division activity in meristematic cells. The polypeptide is Protein MAINTENANCE OF MERISTEMS (Arabidopsis thaliana (Mouse-ear cress)).